A 46-amino-acid chain; its full sequence is Myoregulin (46 aa).

Residues 1–21 (MSGKSWVLISTTSPQSLEDEI) are Cytoplasmic-facing. Residues 22-42 (LGRLLKILFVLFVDLMSIMYV) form a helical membrane-spanning segment. Topologically, residues 43 to 46 (VITS) are lumenal.

In terms of assembly, homooligomer. Monomer. Interacts with ATP2A1/SERCA1. Interacts as a monomer with ATP2A2/SERCA2; the interaction inhibits ATP2A2 activity. As to expression, specifically expressed in all skeletal muscles. Detected in both fast- and slow-type skeletal muscle. Not expressed in cardiac or smooth muscles.

It is found in the sarcoplasmic reticulum membrane. Inhibits the activity of ATP2A1/SERCA1 ATPase in sarcoplasmic reticulum by decreasing the apparent affinity of the ATPase for Ca(2+), thereby acting as a key regulator of skeletal muscle activity. Its high expression in adult skeletal muscle, suggests that it constitutes the predominant regulator of ATP2A1/SERCA1 in adult skeletal muscle. Also inhibits the activity of ATP2A2/SERCA2 and ATP2A3/SERCA3. In Mus musculus (Mouse), this protein is Myoregulin.